Consider the following 489-residue polypeptide: Glycogen synthase (489 aa).

Residue Lys18 coordinates ADP-alpha-D-glucose.

The protein belongs to the glycosyltransferase 1 family. Bacterial/plant glycogen synthase subfamily.

The catalysed reaction is [(1-&gt;4)-alpha-D-glucosyl](n) + ADP-alpha-D-glucose = [(1-&gt;4)-alpha-D-glucosyl](n+1) + ADP + H(+). The protein operates within glycan biosynthesis; glycogen biosynthesis. Synthesizes alpha-1,4-glucan chains using ADP-glucose. This Rhodopseudomonas palustris (strain BisB18) protein is Glycogen synthase.